Here is a 338-residue protein sequence, read N- to C-terminus: Arginase, mitochondrial (338 aa).

A mitochondrion-targeting transit peptide spans 1-15 (MSTIARRGFHYMQRL). L-ornithine contacts are provided by residues Ser73 and 92–95 (DSTN). Residues His157, Asp181, His183, and Asp185 each contribute to the Mn(2+) site. 185–187 (DLY) contributes to the L-ornithine binding site. Substrate is bound at residue 191–193 (EGN). L-ornithine is bound at residue Ser220. The Mn(2+) site is built by Asp266 and Asp268. Position 309 (Glu309) interacts with substrate.

Belongs to the arginase family. As to quaternary structure, forms homohexamers. It depends on Mn(2+) as a cofactor.

It localises to the mitochondrion. It carries out the reaction L-arginine + H2O = urea + L-ornithine. The enzyme catalyses agmatine + H2O = urea + putrescine. Its pathway is nitrogen metabolism; urea cycle; L-ornithine and urea from L-arginine: step 1/1. It functions in the pathway amine and polyamine biosynthesis; putrescine biosynthesis via agmatine pathway; putrescine from agmatine: step 1/1. Functionally, catalyzes the hydrolysis of L-arginine to urea and L-ornithine. The latter can be utilized in the urea cycle or as a precursor for the synthesis of both polyamines and proline. Possesses agmatinase activity. Catalyzes the formation of putrescine from agmatine. This chain is Arginase, mitochondrial, found in Medicago truncatula (Barrel medic).